A 560-amino-acid polypeptide reads, in one-letter code: Dihydroxy-acid dehydratase (560 aa).

Cys50 is a [2Fe-2S] cluster binding site. Asp82 is a binding site for Mg(2+). Cys123 lines the [2Fe-2S] cluster pocket. Mg(2+) is bound by residues Asp124 and Lys125. Lys125 bears the N6-carboxylysine mark. Residue Cys195 participates in [2Fe-2S] cluster binding. Mg(2+) is bound at residue Glu447. Catalysis depends on Ser473, which acts as the Proton acceptor.

It belongs to the IlvD/Edd family. As to quaternary structure, homodimer. [2Fe-2S] cluster serves as cofactor. The cofactor is Mg(2+).

The catalysed reaction is (2R)-2,3-dihydroxy-3-methylbutanoate = 3-methyl-2-oxobutanoate + H2O. The enzyme catalyses (2R,3R)-2,3-dihydroxy-3-methylpentanoate = (S)-3-methyl-2-oxopentanoate + H2O. It functions in the pathway amino-acid biosynthesis; L-isoleucine biosynthesis; L-isoleucine from 2-oxobutanoate: step 3/4. Its pathway is amino-acid biosynthesis; L-valine biosynthesis; L-valine from pyruvate: step 3/4. Functions in the biosynthesis of branched-chain amino acids. Catalyzes the dehydration of (2R,3R)-2,3-dihydroxy-3-methylpentanoate (2,3-dihydroxy-3-methylvalerate) into 2-oxo-3-methylpentanoate (2-oxo-3-methylvalerate) and of (2R)-2,3-dihydroxy-3-methylbutanoate (2,3-dihydroxyisovalerate) into 2-oxo-3-methylbutanoate (2-oxoisovalerate), the penultimate precursor to L-isoleucine and L-valine, respectively. The sequence is that of Dihydroxy-acid dehydratase from Methylibium petroleiphilum (strain ATCC BAA-1232 / LMG 22953 / PM1).